The chain runs to 277 residues: Phosphoenolpyruvate synthase regulatory protein (277 aa).

ADP is bound at residue 157–164 (GVSRCGKT).

This sequence belongs to the pyruvate, phosphate/water dikinase regulatory protein family. PSRP subfamily.

It catalyses the reaction [pyruvate, water dikinase] + ADP = [pyruvate, water dikinase]-phosphate + AMP + H(+). It carries out the reaction [pyruvate, water dikinase]-phosphate + phosphate + H(+) = [pyruvate, water dikinase] + diphosphate. Bifunctional serine/threonine kinase and phosphorylase involved in the regulation of the phosphoenolpyruvate synthase (PEPS) by catalyzing its phosphorylation/dephosphorylation. This Escherichia coli O1:K1 / APEC protein is Phosphoenolpyruvate synthase regulatory protein.